Consider the following 43-residue polypeptide: Metallothionein-3 (43 aa).

It belongs to the metallothionein superfamily. Type 5 family.

This protein binds cations of several transition elements. Thought to be involved in metal ion homeostasis. The chain is Metallothionein-3 (MtnC) from Drosophila melanogaster (Fruit fly).